Here is a 794-residue protein sequence, read N- to C-terminus: Protocadherin beta-6 (794 aa).

The signal sequence occupies residues 1-27; the sequence is MMQTKVQNKKRQVAFFILLMLWGEVGS. The Extracellular segment spans residues 28–688; the sequence is ESIQYSVLEE…AQADLLTVYL (661 aa). Cadherin domains are found at residues 34–132, 137–241, 246–345, 350–449, and 454–559; these read VLEE…APEF, MLLK…VPEF, YEAQ…APEL, FISP…APAF, and YTLF…SPFV. N46 carries an N-linked (GlcNAc...) asparagine glycan. C95 and C101 are disulfide-bonded. N183 is a glycosylation site (N-linked (GlcNAc...) asparagine). N-linked (GlcNAc...) asparagine glycosylation is present at N416. N565 carries N-linked (GlcNAc...) asparagine glycosylation. The region spanning 566 to 669 is the Cadherin 6 domain; sequence GSAPCTELVP…LVDGFSQPYL (104 aa). Residues 689–709 form a helical membrane-spanning segment; sequence VVALASVSSLFLFSVLLFVAV. Residues 710 to 794 are Cytoplasmic-facing; sequence RLCRRSRAAS…PTSRNSFPFS (85 aa). A disordered region spans residues 773–794; the sequence is PPQGTEREMEETPTSRNSFPFS. A compositionally biased stretch (polar residues) spans 784-794; the sequence is TPTSRNSFPFS.

In terms of assembly, forms homodimers in trans (molecules expressed by two different cells). Forms promiscuous heterodimers in cis (at the plasma membrane of the same cell) with other protocadherins.

It is found in the cell membrane. Its function is as follows. Calcium-dependent cell-adhesion protein involved in cells self-recognition and non-self discrimination. Thereby, it is involved in the establishment and maintenance of specific neuronal connections in the brain. The sequence is that of Protocadherin beta-6 from Pan troglodytes (Chimpanzee).